The primary structure comprises 139 residues: MWNPSAGPNPYPPQVVCPGGSNPACPPSQNPAFPPGPCPPGIPQGNPAFPPCRPPYPVPQPGCPGYQPSGPYPPPYPPAAPGMCPVNPPAPGMVGPGIVIDKKTRKKMKKAHKKSHKHHKHGKHSSSSSSSSSSSSDSD.

Residues 1 to 139 form a disordered region; the sequence is MWNPSAGPNP…SSSSSSSDSD (139 aa). Composition is skewed to pro residues over residues 24-62 and 70-91; these read ACPP…PQPG and GPYP…PPAP. Residues 103–124 are compositionally biased toward basic residues; the sequence is KTRKKMKKAHKKSHKHHKHGKH. A compositionally biased stretch (low complexity) spans 125-139; that stretch reads SSSSSSSSSSSSDSD.

It is found in the nucleus. In terms of biological role, negatively regulates TSP1 expression at the level of transcription. This down-regulation was shown to reduce taxane-induced apoptosis. This Rattus norvegicus (Rat) protein is Proline-rich protein 13 (Prr13).